Reading from the N-terminus, the 291-residue chain is Phycobilisome 32.1 kDa linker polypeptide, phycocyanin-associated, rod 1 (291 aa).

The PBS-linker domain occupies 2–179 (AITTAASRLG…LYRGYANSDR (178 aa)). The region spanning 236 to 288 (SKLFRVEITAISAPGYPKVRRSNKAVIVPFEQLNQTLQQINRLGGKVASITPA) is the CpcD-like domain.

It belongs to the phycobilisome linker protein family. Part of 2 PBS rod complexes, the conventional CpcG-PBS rod and a photosystem I-specific CpcL-PBS rod, both of which include ferredoxin--NADP reductase (petH). CpcG-PBS has on average 3 stacked phycocyanin hexamers (PC, CpcA and CpcB). Linker CpcG connects the PC stack to the thylakoid, the hexamers are linked by 1 copy of CpcC1, 1 copy of CpcC2 and the stack is terminated by a single copy of CpcD. The CpcL-PBS has on average 5 stacked phycocyanin hexamers (PC, CpcA and CpcB). Linker CpcL connects the PC stack to the thylakoid, the hexamers are linked by 1 copy of CpcC1, 3 copies of CpcC2 and the stack is terminated by a single copy of CpcD.

It is found in the cellular thylakoid membrane. In terms of biological role, rod linker protein, connecting hexameric phycocyanin (PC, made by cpcA and cpcB) rods in the phycobilisome (PBS). PC is the major phycobiliprotein in PBS rods. Linker polypeptides determine the state of aggregation and the location of the disk-shaped phycobiliprotein units within the phycobilisome and modulate their spectroscopic properties in order to mediate a directed and optimal energy transfer. The chain is Phycobilisome 32.1 kDa linker polypeptide, phycocyanin-associated, rod 1 (cpcC1) from Synechocystis sp. (strain ATCC 27184 / PCC 6803 / Kazusa).